The chain runs to 335 residues: Zinc transporter ZIP11 (335 aa).

Transmembrane regions (helical) follow at residues 12-32, 44-64, 72-92, 187-207, 256-278, 283-300, and 315-335; these read LLGT…VFIF, LGFA…APAV, GFGA…AAFV, IALL…AVGV, FWYG…FAVV, VLPY…YVVM, and LASW…VGLG.

This sequence belongs to the ZIP transporter (TC 2.A.5) family.

The protein localises to the cell membrane. It localises to the nucleus. It is found in the cytoplasm. The protein resides in the golgi apparatus. The enzyme catalyses Zn(2+)(in) = Zn(2+)(out). It carries out the reaction Cu(2+)(in) = Cu(2+)(out). Functionally, zinc importer that regulates cytosolic zinc concentrations either via zinc influx from the extracellular compartment or efflux from intracellular organelles such as Golgi apparatus. May transport copper ions as well. The transport mechanism remains to be elucidated. This is Zinc transporter ZIP11 (Slc39a11) from Rattus norvegicus (Rat).